We begin with the raw amino-acid sequence, 280 residues long: Shikimate dehydrogenase (NADP(+)) (280 aa).

Shikimate-binding positions include 15 to 17 (SLS) and threonine 62. The active-site Proton acceptor is lysine 66. Shikimate-binding residues include asparagine 88 and aspartate 104. Residues 128–132 (GAGGA), 151–156 (NRTEGR), and isoleucine 222 contribute to the NADP(+) site. Residue tyrosine 224 participates in shikimate binding. Glycine 245 lines the NADP(+) pocket.

It belongs to the shikimate dehydrogenase family. As to quaternary structure, homodimer.

The catalysed reaction is shikimate + NADP(+) = 3-dehydroshikimate + NADPH + H(+). It participates in metabolic intermediate biosynthesis; chorismate biosynthesis; chorismate from D-erythrose 4-phosphate and phosphoenolpyruvate: step 4/7. Involved in the biosynthesis of the chorismate, which leads to the biosynthesis of aromatic amino acids. Catalyzes the reversible NADPH linked reduction of 3-dehydroshikimate (DHSA) to yield shikimate (SA). The chain is Shikimate dehydrogenase (NADP(+)) from Methanosarcina barkeri (strain Fusaro / DSM 804).